The following is a 617-amino-acid chain: Phosphomethylpyrimidine synthase (617 aa).

Residues Asn230, Met259, Tyr288, His324, 344–346 (SRG), 385–388 (DGLR), and Glu424 contribute to the substrate site. His428 contacts Zn(2+). Tyr451 is a binding site for substrate. Residue His492 coordinates Zn(2+). Positions 572, 575, and 580 each coordinate [4Fe-4S] cluster.

The protein belongs to the ThiC family. As to quaternary structure, homodimer. The cofactor is [4Fe-4S] cluster.

The catalysed reaction is 5-amino-1-(5-phospho-beta-D-ribosyl)imidazole + S-adenosyl-L-methionine = 4-amino-2-methyl-5-(phosphooxymethyl)pyrimidine + CO + 5'-deoxyadenosine + formate + L-methionine + 3 H(+). The protein operates within cofactor biosynthesis; thiamine diphosphate biosynthesis. In terms of biological role, catalyzes the synthesis of the hydroxymethylpyrimidine phosphate (HMP-P) moiety of thiamine from aminoimidazole ribotide (AIR) in a radical S-adenosyl-L-methionine (SAM)-dependent reaction. The protein is Phosphomethylpyrimidine synthase of Paracidovorax citrulli (strain AAC00-1) (Acidovorax citrulli).